The chain runs to 412 residues: Methylmalonic aciduria type A homolog, mitochondrial (412 aa).

The N-terminal 15 residues, 1 to 15 (MVVRALVRAHPLSRI), are a transit peptide targeting the mitochondrion. Residues 132–140 (GSPGVGKSS), Asp-275, and 311–313 (SIM) each bind GTP.

The protein belongs to the SIMIBI class G3E GTPase family. ArgK/MeaB subfamily.

The protein resides in the mitochondrion. In terms of biological role, may have GTPase activity. May also bind and hydrolyze ATP. May function as chaperone. Likely to have a role in propionyl-CoA metabolism and adenosylcobalamin synthesis. The chain is Methylmalonic aciduria type A homolog, mitochondrial from Caenorhabditis briggsae.